We begin with the raw amino-acid sequence, 334 residues long: Glycerol-3-phosphate dehydrogenase [NAD(P)+] (334 aa).

5 residues coordinate NADPH: Ser10, Trp11, His31, Arg32, and Lys105. Lys105, Gly136, and Ser138 together coordinate sn-glycerol 3-phosphate. Ala140 contacts NADPH. Sn-glycerol 3-phosphate contacts are provided by Lys191, Asp244, Ser254, Arg255, and Asn256. Lys191 acts as the Proton acceptor in catalysis. Residue Arg255 coordinates NADPH. Val279 and Glu281 together coordinate NADPH.

Belongs to the NAD-dependent glycerol-3-phosphate dehydrogenase family.

It localises to the cytoplasm. It catalyses the reaction sn-glycerol 3-phosphate + NAD(+) = dihydroxyacetone phosphate + NADH + H(+). The enzyme catalyses sn-glycerol 3-phosphate + NADP(+) = dihydroxyacetone phosphate + NADPH + H(+). Its pathway is membrane lipid metabolism; glycerophospholipid metabolism. Catalyzes the reduction of the glycolytic intermediate dihydroxyacetone phosphate (DHAP) to sn-glycerol 3-phosphate (G3P), the key precursor for phospholipid synthesis. In Chlorobium phaeobacteroides (strain BS1), this protein is Glycerol-3-phosphate dehydrogenase [NAD(P)+].